Reading from the N-terminus, the 103-residue chain is Insulin (103 aa).

The first 20 residues, 1 to 20 (IQSLPLLALLALSGPGTSHA), serve as a signal peptide directing secretion. Cystine bridges form between Cys-27/Cys-89, Cys-39/Cys-102, and Cys-88/Cys-93. Residues 53–80 (DAEHPLVNGPLHGEVGDLPFQQEEFEKV) constitute a propeptide, c peptide.

This sequence belongs to the insulin family. As to quaternary structure, heterodimer of a B chain and an A chain linked by two disulfide bonds.

The protein resides in the secreted. Functionally, insulin decreases blood glucose concentration. It increases cell permeability to monosaccharides, amino acids and fatty acids. It accelerates glycolysis, the pentose phosphate cycle, and glycogen synthesis in liver. The protein is Insulin (INS) of Selasphorus rufus (Rufous hummingbird).